We begin with the raw amino-acid sequence, 34 residues long: Trypsin inhibitor 1 (34 aa).

A cross-link (cyclopeptide (Ser-Gly)) is located at residues 1 to 34 (SGSDGGVCPKILQRCRRDSDCPGACICRGNGYCG). Cystine bridges form between cysteine 8–cysteine 25, cysteine 15–cysteine 27, and cysteine 21–cysteine 33.

Post-translationally, this is a cyclic peptide.

Its subcellular location is the secreted. Its function is as follows. Inhibits trypsin; probably participates in a plant defense mechanism. In Momordica cochinchinensis (Spiny bitter cucumber), this protein is Trypsin inhibitor 1.